The primary structure comprises 639 residues: Chaperone protein DnaK (639 aa).

The residue at position 198 (Thr-198) is a Phosphothreonine; by autocatalysis. Low complexity predominate over residues 603-618; that stretch reads AKAQTQGGAQEGAAKQ. The tract at residues 603-639 is disordered; that stretch reads AKAQTQGGAQEGAAKQSNATADDVVDAEFEEVKDDKK. Over residues 625-639 the composition is skewed to acidic residues; sequence DVVDAEFEEVKDDKK.

Belongs to the heat shock protein 70 family.

In terms of biological role, acts as a chaperone. This chain is Chaperone protein DnaK, found in Shewanella sp. (strain ANA-3).